Consider the following 668-residue polypeptide: Fructose-1,6-bisphosphatase class 3 (668 aa).

This sequence belongs to the FBPase class 3 family. The cofactor is Mn(2+).

It catalyses the reaction beta-D-fructose 1,6-bisphosphate + H2O = beta-D-fructose 6-phosphate + phosphate. It functions in the pathway carbohydrate biosynthesis; gluconeogenesis. The polypeptide is Fructose-1,6-bisphosphatase class 3 (Clostridium botulinum (strain Okra / Type B1)).